The sequence spans 320 residues: MRSAQVYRWQIPMDAGVVLRDRRLKTREGLYVCLREGEREGWGEISPLPGFSQETWEEAQSVLLAWVNNWLAGDCELPQMPSVAFGVSCALAELADTLPQAANYRAAPLCNGDPDDLILKLADMPGEKVAKVKVGLYEAVRDGMVVNLLLEAIPDLHLRLDANRAWTPLKGQQFAKYVNPDYRHRIAFLEEPCKTRDDSRAFARETGIAIAWDESLREPDFAFVAEKGVRAVVIKPTLTGSLDKVREQVQAAHALGLTAVISSSIESSLGLTQLARIAAWLTPDTIPGLDTLDLMQAQQVRRWPGSPLPLVEVDALERLL.

Lys133 functions as the Proton donor in the catalytic mechanism. Mg(2+) contacts are provided by Asp161, Glu190, and Asp213. The active-site Proton acceptor is Lys235.

The protein belongs to the mandelate racemase/muconate lactonizing enzyme family. MenC type 1 subfamily. The cofactor is a divalent metal cation.

The catalysed reaction is (1R,6R)-6-hydroxy-2-succinyl-cyclohexa-2,4-diene-1-carboxylate = 2-succinylbenzoate + H2O. The protein operates within quinol/quinone metabolism; 1,4-dihydroxy-2-naphthoate biosynthesis; 1,4-dihydroxy-2-naphthoate from chorismate: step 4/7. It functions in the pathway quinol/quinone metabolism; menaquinone biosynthesis. In terms of biological role, converts 2-succinyl-6-hydroxy-2,4-cyclohexadiene-1-carboxylate (SHCHC) to 2-succinylbenzoate (OSB). This chain is o-succinylbenzoate synthase, found in Escherichia coli (strain SMS-3-5 / SECEC).